The sequence spans 379 residues: Probable pectin lyase B (379 aa).

Residues 1-20 (MHYKLLFAAAAASLASAVSA) form the signal peptide. 2 disulfide bridges follow: Cys-83/Cys-102 and Cys-92/Cys-226. Asn-129 and Asn-252 each carry an N-linked (GlcNAc...) asparagine glycan. The active site involves Arg-256. Cys-323 and Cys-331 are joined by a disulfide.

It belongs to the polysaccharide lyase 1 family.

It localises to the secreted. The catalysed reaction is Eliminative cleavage of (1-&gt;4)-alpha-D-galacturonan methyl ester to give oligosaccharides with 4-deoxy-6-O-methyl-alpha-D-galact-4-enuronosyl groups at their non-reducing ends.. Its function is as follows. Pectinolytic enzymes consist of four classes of enzymes: pectin lyase, polygalacturonase, pectin methylesterase and rhamnogalacturonase. Among pectinolytic enzymes, pectin lyase is the most important in depolymerization of pectin, since it cleaves internal glycosidic bonds of highly methylated pectins. In Aspergillus niger (strain ATCC MYA-4892 / CBS 513.88 / FGSC A1513), this protein is Probable pectin lyase B (pelB).